The following is a 34-amino-acid chain: Unknown protein 5 (34 aa).

The sequence is that of Unknown protein 5 from Pseudotsuga menziesii (Douglas-fir).